The chain runs to 417 residues: Serine hydroxymethyltransferase (417 aa).

(6S)-5,6,7,8-tetrahydrofolate is bound by residues Leu-112 and 116-118; that span reads GHL. An N6-(pyridoxal phosphate)lysine modification is found at Lys-221. (6S)-5,6,7,8-tetrahydrofolate is bound at residue Glu-247.

This sequence belongs to the SHMT family. Homodimer. It depends on pyridoxal 5'-phosphate as a cofactor.

The protein localises to the cytoplasm. It catalyses the reaction (6R)-5,10-methylene-5,6,7,8-tetrahydrofolate + glycine + H2O = (6S)-5,6,7,8-tetrahydrofolate + L-serine. The protein operates within one-carbon metabolism; tetrahydrofolate interconversion. Its pathway is amino-acid biosynthesis; glycine biosynthesis; glycine from L-serine: step 1/1. Functionally, catalyzes the reversible interconversion of serine and glycine with tetrahydrofolate (THF) serving as the one-carbon carrier. This reaction serves as the major source of one-carbon groups required for the biosynthesis of purines, thymidylate, methionine, and other important biomolecules. Also exhibits THF-independent aldolase activity toward beta-hydroxyamino acids, producing glycine and aldehydes, via a retro-aldol mechanism. This chain is Serine hydroxymethyltransferase, found in Borrelia recurrentis (strain A1).